The sequence spans 673 residues: MLEQARRRLAGLNAKLRHHDVLYHGLDAPEVTDHQYDLLVQEKKRLLDEFPDISQYDDYADVVGTPKIDSRFPKVQHLEPMLSLENAFTVQDVEKFITRVRRFLELQPDDILELSCELKMDGMSFSALYHGGKLTRVATRGNGHFGEDITTNAMVLRGLPHQLDSAPEVLEVRGEIYMHHEDFEKLRGSCNFANPRNAAAGSIRQLNQKIVEERNLSYVAYSAVNSTFATQQEILKQLDEWGFHTNKQVLFTDKIEEAIAFYNSVYTTRSALGYDIDGVVYKVNSTNFQKLLGATGKSPRWAIAHKFPSTEARTKLLDITVQVGRTGVVTPIAELEPINIGGVMVSRASLHNLNEIERKDVRIGDLVIVKRAGEVIPQVVDVDKTLRSSGTQKFVFPSHCPSCGSKLHREPGEVALRCVAELSCKAQALERVKHFVSRDGLNIMGLGAKQIEFFCNHGLIGSIADIFSLEEKLHGINLDTEHGWGEKSVANLIAAIRNSATVRLSNFIFALGIRFIGVGAAKLVAEHYRSYKNWHQAMLALTETHDTVQIRGLGEKSISSLKAFFSVQGNLEVLESLSAKLNILDEASPAQRGSSAISGKTVVFTGTLESMSRTEAKLQAESLGAKVANSVSANTWLLVAGSNPGSKHEKALSLNVRVIDEQTWVKMVEDARS.

Residues 33–37, 83–84, and glutamate 117 each bind NAD(+); these read DHQYD and SL. Lysine 119 functions as the N6-AMP-lysine intermediate in the catalytic mechanism. The NAD(+) site is built by arginine 140, glutamate 175, lysine 282, and lysine 306. The Zn(2+) site is built by cysteine 400, cysteine 403, cysteine 418, and cysteine 424. The BRCT domain maps to 592-673; that stretch reads RGSSAISGKT…WVKMVEDARS (82 aa).

It belongs to the NAD-dependent DNA ligase family. LigA subfamily. It depends on Mg(2+) as a cofactor. Requires Mn(2+) as cofactor.

It catalyses the reaction NAD(+) + (deoxyribonucleotide)n-3'-hydroxyl + 5'-phospho-(deoxyribonucleotide)m = (deoxyribonucleotide)n+m + AMP + beta-nicotinamide D-nucleotide.. Functionally, DNA ligase that catalyzes the formation of phosphodiester linkages between 5'-phosphoryl and 3'-hydroxyl groups in double-stranded DNA using NAD as a coenzyme and as the energy source for the reaction. It is essential for DNA replication and repair of damaged DNA. This is DNA ligase from Anaplasma marginale (strain St. Maries).